We begin with the raw amino-acid sequence, 207 residues long: Putative 3-methyladenine DNA glycosylase (207 aa).

Over residues 182–193 (PAPAGARAARAP) the composition is skewed to low complexity. Residues 182–207 (PAPAGARAARAPAPAPRPRRPRGSGP) form a disordered region. Basic residues predominate over residues 198-207 (RPRRPRGSGP).

Belongs to the DNA glycosylase MPG family.

The sequence is that of Putative 3-methyladenine DNA glycosylase from Anaeromyxobacter dehalogenans (strain 2CP-C).